Here is a 440-residue protein sequence, read N- to C-terminus: Nuclear hormone receptor family member nhr-130 (440 aa).

Residues 34–110 constitute a DNA-binding region (nuclear receptor); the sequence is LYTCQVCALP…VGMDPGRFQF (77 aa). 2 consecutive NR C4-type zinc fingers follow at residues 37 to 57 and 74 to 93; these read CQVC…CRAC and CKKQ…CKKC. The NR LBD domain occupies 184-439; the sequence is EKPLIARNNL…FSHPEMFEDT (256 aa).

The protein belongs to the nuclear hormone receptor family.

Its subcellular location is the nucleus. Functionally, orphan nuclear receptor. The chain is Nuclear hormone receptor family member nhr-130 (nhr-130) from Caenorhabditis elegans.